A 94-amino-acid polypeptide reads, in one-letter code: Acylphosphatase (94 aa).

An Acylphosphatase-like domain is found at 8-94 (TVHVIVKGKV…EKRYKHFAQL (87 aa)). Catalysis depends on residues R23 and N41.

Belongs to the acylphosphatase family.

It carries out the reaction an acyl phosphate + H2O = a carboxylate + phosphate + H(+). This Bordetella parapertussis (strain 12822 / ATCC BAA-587 / NCTC 13253) protein is Acylphosphatase (acyP).